A 179-amino-acid polypeptide reads, in one-letter code: Methylated-DNA--protein-cysteine methyltransferase, inducible (179 aa).

Catalysis depends on Cys141, which acts as the Nucleophile; methyl group acceptor.

This sequence belongs to the MGMT family.

The catalysed reaction is a 6-O-methyl-2'-deoxyguanosine in DNA + L-cysteinyl-[protein] = S-methyl-L-cysteinyl-[protein] + a 2'-deoxyguanosine in DNA. The enzyme catalyses a 4-O-methyl-thymidine in DNA + L-cysteinyl-[protein] = a thymidine in DNA + S-methyl-L-cysteinyl-[protein]. Involved in the cellular defense against the biological effects of O6-methylguanine (O6-MeG) and O4-methylthymine (O4-MeT) in DNA. Repairs the methylated nucleobase in DNA by stoichiometrically transferring the methyl group to a cysteine residue in the enzyme. This is a suicide reaction: the enzyme is irreversibly inactivated. This Bacillus subtilis (strain 168) protein is Methylated-DNA--protein-cysteine methyltransferase, inducible (adaB).